The sequence spans 655 residues: UvrABC system protein B (655 aa).

In terms of domain architecture, Helicase ATP-binding spans 25-181 (DGINKGEKEQ…IRKLVFMQYE (157 aa)). 38 to 45 (GVTGSGKT) contacts ATP. The short motif at 91–114 (YYDYYQPEAYVPRTDTFIDKESSV) is the Beta-hairpin element. Residues 428-590 (QVEDLLGEVK…IVPKTTKRAL (163 aa)) enclose the Helicase C-terminal domain. Positions 615 to 650 (RLLISDLENDMKEAAAKLDFERAASLRDQIATLKGL) constitute a UVR domain.

It belongs to the UvrB family. As to quaternary structure, forms a heterotetramer with UvrA during the search for lesions. Interacts with UvrC in an incision complex.

It is found in the cytoplasm. Its function is as follows. The UvrABC repair system catalyzes the recognition and processing of DNA lesions. A damage recognition complex composed of 2 UvrA and 2 UvrB subunits scans DNA for abnormalities. Upon binding of the UvrA(2)B(2) complex to a putative damaged site, the DNA wraps around one UvrB monomer. DNA wrap is dependent on ATP binding by UvrB and probably causes local melting of the DNA helix, facilitating insertion of UvrB beta-hairpin between the DNA strands. Then UvrB probes one DNA strand for the presence of a lesion. If a lesion is found the UvrA subunits dissociate and the UvrB-DNA preincision complex is formed. This complex is subsequently bound by UvrC and the second UvrB is released. If no lesion is found, the DNA wraps around the other UvrB subunit that will check the other stand for damage. In Methanobrevibacter smithii (strain ATCC 35061 / DSM 861 / OCM 144 / PS), this protein is UvrABC system protein B.